Reading from the N-terminus, the 447-residue chain is Glucose-6-phosphate isomerase (447 aa).

Catalysis depends on glutamate 288, which acts as the Proton donor. Residues histidine 309 and lysine 423 contribute to the active site.

This sequence belongs to the GPI family.

The protein resides in the cytoplasm. The enzyme catalyses alpha-D-glucose 6-phosphate = beta-D-fructose 6-phosphate. It functions in the pathway carbohydrate biosynthesis; gluconeogenesis. The protein operates within carbohydrate degradation; glycolysis; D-glyceraldehyde 3-phosphate and glycerone phosphate from D-glucose: step 2/4. In terms of biological role, catalyzes the reversible isomerization of glucose-6-phosphate to fructose-6-phosphate. This is Glucose-6-phosphate isomerase from Lactobacillus johnsonii (strain CNCM I-12250 / La1 / NCC 533).